Reading from the N-terminus, the 98-residue chain is QDEKRPRTAFTGDQLARLKREFSENKYLTEQRRTCLAKELNLNESQIKIWFQNKRAKMKKASGVKNQLALQLMAQGLYNHSSSSSSSSSSSSSIFLLA.

Residues 3–62 (EKRPRTAFTGDQLARLKREFSENKYLTEQRRTCLAKELNLNESQIKIWFQNKRAKMKKAS) constitute a DNA-binding region (homeobox). Residues 79-98 (NHSSSSSSSSSSSSSIFLLA) are disordered. Positions 81–98 (SSSSSSSSSSSSSIFLLA) are enriched in low complexity.

It belongs to the engrailed homeobox family. Phosphorylated in the Ser-rich domain.

Its subcellular location is the nucleus. Functionally, this protein specifies the body segmentation pattern. The protein is Homeobox protein Ht-En (HT-EN) of Helobdella triserialis (Leech).